Reading from the N-terminus, the 179-residue chain is MDAKVYVGGLPSDATSQELEEIFDRFGRIRKVWVARRPPGFAFVEYDDVRDAEDAVRALDGSRICGVRARVELSTGQRRGGGGRGGGFGGRGGGGRDRSPYRGDRGRSRSRSRDRGRDRSRDRSRDRSRDRSRDRSRERSRERERTRSRSRSPQERDRSHSKSRSRSRSRSRSRSASPH.

Positions 3 to 76 (AKVYVGGLPS…VRARVELSTG (74 aa)) constitute an RRM domain. The interval 75–179 (TGQRRGGGGR…RSRSRSASPH (105 aa)) is disordered. Residues 78–93 (RRGGGGRGGGFGGRGG) show a composition bias toward gly residues. Residues 94-160 (GGRDRSPYRG…RSPQERDRSH (67 aa)) are compositionally biased toward basic and acidic residues. Residues 161 to 173 (SKSRSRSRSRSRS) are compositionally biased toward basic residues.

Belongs to the splicing factor SR family. Post-translationally, extensively phosphorylated on serine residues in the RS domain.

Its subcellular location is the nucleus. In terms of biological role, plays a functionally redundant role in shifting germ cell sexual differentiation in hermaprodites. Required for the development of somatic gonad structures and for progression from larval stage to adulthood. The protein is Probable splicing factor, arginine/serine-rich 6 (rsp-6) of Caenorhabditis elegans.